The following is a 206-amino-acid chain: MNNIYQKDLGLQQYNKVFENMLEFTSTRTPETNDEIWLVEHPAVFTQGKHGKPEHILNSHNIPIVATDRGGQVTYHGPGQAVIYFLLDIKRNKLGAKKLVTTVEQACINMLDKYYNLKAHIIDGAHGIYINNQKIASLGLRIKQGKSYHGIAINTNMDLTPFSYINPCGYSGLKMCQLANFYQEADIKKVQQQYTAEFVTLLNNSI.

Residues 30 to 206 (PETNDEIWLV…EFVTLLNNSI (177 aa)) form the BPL/LPL catalytic domain. Substrate-binding positions include 69 to 76 (RGGQVTYH), 137 to 139 (SLG), and 150 to 152 (GIA). The Acyl-thioester intermediate role is filled by Cys168.

It belongs to the LipB family.

It localises to the cytoplasm. The enzyme catalyses octanoyl-[ACP] + L-lysyl-[protein] = N(6)-octanoyl-L-lysyl-[protein] + holo-[ACP] + H(+). It functions in the pathway protein modification; protein lipoylation via endogenous pathway; protein N(6)-(lipoyl)lysine from octanoyl-[acyl-carrier-protein]: step 1/2. Catalyzes the transfer of endogenously produced octanoic acid from octanoyl-acyl-carrier-protein onto the lipoyl domains of lipoate-dependent enzymes. Lipoyl-ACP can also act as a substrate although octanoyl-ACP is likely to be the physiological substrate. The sequence is that of Octanoyltransferase from Francisella tularensis subsp. novicida (strain U112).